The sequence spans 150 residues: Single-stranded DNA-binding protein 1 (150 aa).

Positions 1–104 constitute an SSB domain; that stretch reads MINNVVLVGR…VVADTFQMLE (104 aa). A compositionally biased stretch (polar residues) spans 103–120; it reads LESNKTQGQQTSKPQAQN. Residues 103–150 are disordered; sequence LESNKTQGQQTSKPQAQNKKPQAPDPFKAPAADPFAGGTEISDDDLPF. Over residues 121–138 the composition is skewed to low complexity; the sequence is KKPQAPDPFKAPAADPFA. The Important for interaction with partner proteins motif lies at 145 to 150; that stretch reads DDDLPF.

As to quaternary structure, homotetramer.

Plays an important role in DNA replication, recombination and repair. Binds to ssDNA and to an array of partner proteins to recruit them to their sites of action during DNA metabolism. This Lactococcus lactis subsp. lactis (strain IL1403) (Streptococcus lactis) protein is Single-stranded DNA-binding protein 1 (ssb1).